A 527-amino-acid chain; its full sequence is Cytokinin dehydrogenase 3 (527 aa).

The first 22 residues, 1-22, serve as a signal peptide directing secretion; the sequence is MEVAMVCTRVNLLILILSLCSP. An FAD-binding PCMH-type domain is found at 52–231; it reads LFHSPSAVLK…TRARILLQEA (180 aa). Positions 87, 89, and 91 each coordinate FAD. His92 is modified (pros-8alpha-FAD histidine). Ser93, Gln97, Asp155, Thr160, Ser166, Ile170, and Ile221 together coordinate FAD. N-linked (GlcNAc...) asparagine glycosylation is present at Asn413. FAD-binding residues include Tyr471 and Gln509.

It belongs to the oxygen-dependent FAD-linked oxidoreductase family. In terms of assembly, monomer. FAD is required as a cofactor. Expressed in inflorescence meristems. Highly expressed in lamina joints, and mainly in the parenchyma cells and vascular bundles on the abaxial side of the lamina joint. Expressed in roots, stems, leaves and young panicles.

It is found in the endoplasmic reticulum. The enzyme catalyses N(6)-dimethylallyladenine + A + H2O = 3-methyl-2-butenal + adenine + AH2. Functionally, catalyzes the oxidation of cytokinins, a family of N(6)-substituted adenine derivatives, where the substituent is an isopentenyl group. Cytokinins are plant hormones essential for plant growth, development, and stress responses. Exhibits specific activities toward trans-zeatin (tZ) and isopentenyladenine (iP). Plays a role in lamina joint inclination. Regulates cell proliferation and vascular bundle number on the abaxial side of lamina joint. This Oryza sativa subsp. japonica (Rice) protein is Cytokinin dehydrogenase 3.